Consider the following 236-residue polypeptide: uncharacterized protein (236 aa).

NADP(+)-binding residues include aspartate 22, asparagine 49, and lysine 82. Catalysis depends on proton donor residues serine 100 and tyrosine 114. Residues tyrosine 114 and lysine 118 each coordinate NADP(+). Lysine 118 functions as the Lowers pKa of active site Tyr in the catalytic mechanism.

It belongs to the short-chain dehydrogenases/reductases (SDR) family.

The protein resides in the cytoplasm. Its subcellular location is the nucleus. This is an uncharacterized protein from Schizosaccharomyces pombe (strain 972 / ATCC 24843) (Fission yeast).